Consider the following 384-residue polypeptide: PqqA peptide cyclase (384 aa).

The 217-residue stretch at 15–231 (PGPPLWLLAE…NQWRDKLAAE (217 aa)) folds into the Radical SAM core domain. [4Fe-4S] cluster-binding residues include Cys29, Cys33, and Cys36.

Belongs to the radical SAM superfamily. PqqE family. In terms of assembly, interacts with PqqD. The interaction is necessary for activity of PqqE. It depends on [4Fe-4S] cluster as a cofactor.

The enzyme catalyses [PQQ precursor protein] + S-adenosyl-L-methionine = E-Y cross-linked-[PQQ precursor protein] + 5'-deoxyadenosine + L-methionine + H(+). Its pathway is cofactor biosynthesis; pyrroloquinoline quinone biosynthesis. In terms of biological role, catalyzes the cross-linking of a glutamate residue and a tyrosine residue in the PqqA protein as part of the biosynthesis of pyrroloquinoline quinone (PQQ). The protein is PqqA peptide cyclase of Ectopseudomonas mendocina (strain ymp) (Pseudomonas mendocina).